The following is an 86-amino-acid chain: Small ribosomal subunit protein bS20 (86 aa).

The segment at 1–25 (MANSASSRKRARQAVKRNKHNSQIR) is disordered. Basic residues predominate over residues 7 to 25 (SRKRARQAVKRNKHNSQIR).

Belongs to the bacterial ribosomal protein bS20 family.

Functionally, binds directly to 16S ribosomal RNA. This chain is Small ribosomal subunit protein bS20, found in Vesicomyosocius okutanii subsp. Calyptogena okutanii (strain HA).